Reading from the N-terminus, the 1172-residue chain is NACHT, LRR and PYD domains-containing protein 1b allele 3 (1172 aa).

A disordered region spans residues 1-22; it reads MEESPPKQKSNTKVAQHEGQQD. Residues 126–435 form the NACHT domain; that stretch reads QLVIIEGAAG…EFFAAISCIL (310 aa). 132–139 is an ATP binding site; sequence GAAGIGKS. 2 LRR repeats span residues 627–647 and 684–704; these read NLEGLDLSGNSLRYSVVQSLC and SLTELYLQLNDLGDDGVRMLC. A ZU5 region spans residues 789–922; it reads FWGPTGPVAT…GYTVLKNPSF (134 aa). The FIIND domain maps to 789-1072; the sequence is FWGPTGPVAT…LRPALPRIAQ (284 aa). Positions 923 to 1072 are UPA; sequence SPMGDVLRII…LRPALPRIAQ (150 aa). Positions 1082–1165 constitute a CARD domain; sequence HFMDQHREQL…HLVMDLLEKS (84 aa).

The protein belongs to the NLRP family. In contrast to allele 1 and 2, not able to mediate autocatalytic cleavage. As to expression, expressed in macrophages.

The protein resides in the cytoplasm. It is found in the cytosol. With respect to regulation, in contrast to allele 1, does not undergo autocatalytic cleavage within the FIIND domain and its mode of activation remains unclear. In contrast to alleles 1 and 2, allele 3 is not activated by Val-boroPro (Talabostat, PT-100). Not activated by cleavage by B.anthracis lethal toxin (LT) endopeptidase. Not activated by metabolic inhibitors, such as 2-deoxy-D-glucose and sodium azide. Functionally, may act as the sensor component of the Nlrp1b inflammasome, which mediates inflammasome activation in response to various pathogen-associated signals, leading to subsequent pyroptosis. Inflammasomes are supramolecular complexes that assemble in the cytosol in response to pathogens and other damage-associated signals and play critical roles in innate immunity and inflammation. May act as a recognition receptor (PRR), which recognizes specific pathogens and other damage-associated signals and forms an inflammasome complex: the inflammasome directly recruits pro-caspase-1 (proCASP1) independently of PYCARD/ASC and promotes caspase-1 (CASP1) activation, which subsequently cleaves and activates inflammatory cytokines IL1B and IL18 and gasdermin-D (GSDMD), leading to pyroptosis. In the absence of GSDMD expression, the Nlrp1b inflammasome is able to recruit and activate CASP8, leading to activation of gasdermin-E (GSDME). Contrary to Nlrp1b allele 1, allele 3 is not activated by Bacillus anthracis lethal toxin. The absence of autocatalytic cleavage within the FIIND domain, which regulates activation in other alleles, suggests that allele 3 may be non-functional. This chain is NACHT, LRR and PYD domains-containing protein 1b allele 3, found in Mus musculus (Mouse).